The primary structure comprises 297 residues: Aspartate carbamoyltransferase catalytic subunit (297 aa).

Arg48 and Thr49 together coordinate carbamoyl phosphate. Lys76 is an L-aspartate binding site. The carbamoyl phosphate site is built by Arg98, His129, and Gln132. Positions 162 and 214 each coordinate L-aspartate. Ala257 and Pro258 together coordinate carbamoyl phosphate.

It belongs to the aspartate/ornithine carbamoyltransferase superfamily. ATCase family. In terms of assembly, heterododecamer (2C3:3R2) of six catalytic PyrB chains organized as two trimers (C3), and six regulatory PyrI chains organized as three dimers (R2).

The catalysed reaction is carbamoyl phosphate + L-aspartate = N-carbamoyl-L-aspartate + phosphate + H(+). The protein operates within pyrimidine metabolism; UMP biosynthesis via de novo pathway; (S)-dihydroorotate from bicarbonate: step 2/3. Its function is as follows. Catalyzes the condensation of carbamoyl phosphate and aspartate to form carbamoyl aspartate and inorganic phosphate, the committed step in the de novo pyrimidine nucleotide biosynthesis pathway. This chain is Aspartate carbamoyltransferase catalytic subunit, found in Leuconostoc mesenteroides subsp. mesenteroides (strain ATCC 8293 / DSM 20343 / BCRC 11652 / CCM 1803 / JCM 6124 / NCDO 523 / NBRC 100496 / NCIMB 8023 / NCTC 12954 / NRRL B-1118 / 37Y).